Here is a 245-residue protein sequence, read N- to C-terminus: MIIPALDLIEGQVVRLYQGDYGQVTEYKVDPAEQFNLYHQAGANWLHLVDLTGAKDTTARQLDLIAKLLASTPANIQIGGGVRTEQDVIDLLEAGAQRVVVGSTAVKQPELVKGWMEKYGAEKIVLALDINIYQDGTRKVAISGWQEDSGVTIEALINDYLTVGLQHVLCTDISRDGTLEGSNVELYVDLCKQYPQVQFQSSGGIGSLADIEALKGSGVAGVIVGRALLDGKFTAEEAFACWQSE.

The active-site Proton acceptor is the Asp7. Residue Asp129 is the Proton donor of the active site.

The protein belongs to the HisA/HisF family.

Its subcellular location is the cytoplasm. It carries out the reaction 1-(5-phospho-beta-D-ribosyl)-5-[(5-phospho-beta-D-ribosylamino)methylideneamino]imidazole-4-carboxamide = 5-[(5-phospho-1-deoxy-D-ribulos-1-ylimino)methylamino]-1-(5-phospho-beta-D-ribosyl)imidazole-4-carboxamide. It participates in amino-acid biosynthesis; L-histidine biosynthesis; L-histidine from 5-phospho-alpha-D-ribose 1-diphosphate: step 4/9. The chain is 1-(5-phosphoribosyl)-5-[(5-phosphoribosylamino)methylideneamino] imidazole-4-carboxamide isomerase from Vibrio campbellii (strain ATCC BAA-1116).